Here is a 394-residue protein sequence, read N- to C-terminus: Phosphopentomutase (394 aa).

Mn(2+) contacts are provided by Asp15, Asp288, His293, Asp329, His330, and His341.

The protein belongs to the phosphopentomutase family. Mn(2+) is required as a cofactor.

Its subcellular location is the cytoplasm. It carries out the reaction 2-deoxy-alpha-D-ribose 1-phosphate = 2-deoxy-D-ribose 5-phosphate. The catalysed reaction is alpha-D-ribose 1-phosphate = D-ribose 5-phosphate. It functions in the pathway carbohydrate degradation; 2-deoxy-D-ribose 1-phosphate degradation; D-glyceraldehyde 3-phosphate and acetaldehyde from 2-deoxy-alpha-D-ribose 1-phosphate: step 1/2. Functionally, isomerase that catalyzes the conversion of deoxy-ribose 1-phosphate (dRib-1-P) and ribose 1-phosphate (Rib-1-P) to deoxy-ribose 5-phosphate (dRib-5-P) and ribose 5-phosphate (Rib-5-P), respectively. This chain is Phosphopentomutase, found in Bacillus licheniformis (strain ATCC 14580 / DSM 13 / JCM 2505 / CCUG 7422 / NBRC 12200 / NCIMB 9375 / NCTC 10341 / NRRL NRS-1264 / Gibson 46).